The sequence spans 430 residues: tRNA(Ile)-lysidine synthase (430 aa).

Residue 21–26 (SGGLDS) coordinates ATP.

Belongs to the tRNA(Ile)-lysidine synthase family.

It is found in the cytoplasm. It carries out the reaction cytidine(34) in tRNA(Ile2) + L-lysine + ATP = lysidine(34) in tRNA(Ile2) + AMP + diphosphate + H(+). Its function is as follows. Ligates lysine onto the cytidine present at position 34 of the AUA codon-specific tRNA(Ile) that contains the anticodon CAU, in an ATP-dependent manner. Cytidine is converted to lysidine, thus changing the amino acid specificity of the tRNA from methionine to isoleucine. This Salmonella agona (strain SL483) protein is tRNA(Ile)-lysidine synthase.